The primary structure comprises 403 residues: MKSVEEQLALIKRGADELLVEAELVEKLKRGQPLRIKAGFDPTAPDLHLGHTVLINKLRQFQDLGHQVIFLIGDFTGMIGDPSGKSATRPPLTREQVLDYAETYKSQVFKILDPAKTEVAFNSTWMDKLSPADFIRLSSQYTVARMLERDDFDKRYKSNQSIAIHEFLYPLVQGYDSVALKADVELGGTDQKFNLLMGRELQRAYGQEPQCILTMPLLEGLDGVKKMSKSLGNYVGIQEAPGIMYSKLVSIPDSLMWRYFELLSFRSMEEINGLRADCEAGANPRDIKIKLAEELVARFHGEEAAATAHRSAGNRMKEGELPDDLPEISVAAIEDMPISAVLNKAGLVKNAAVARDLLASGGVRIDGEVVDRSFIVKLGATHVCQAGKKAFGRITLVSDESSK.

Positions 42-51 (PTAPDLHLGH) match the 'HIGH' region motif. The short motif at 226–230 (KMSKS) is the 'KMSKS' region element. Lys-229 lines the ATP pocket. An S4 RNA-binding domain is found at 336-396 (MPISAVLNKA…GKKAFGRITL (61 aa)).

Belongs to the class-I aminoacyl-tRNA synthetase family. TyrS type 2 subfamily. Homodimer.

The protein resides in the cytoplasm. It carries out the reaction tRNA(Tyr) + L-tyrosine + ATP = L-tyrosyl-tRNA(Tyr) + AMP + diphosphate + H(+). In terms of biological role, catalyzes the attachment of tyrosine to tRNA(Tyr) in a two-step reaction: tyrosine is first activated by ATP to form Tyr-AMP and then transferred to the acceptor end of tRNA(Tyr). The polypeptide is Tyrosine--tRNA ligase (Pseudomonas syringae pv. tomato (strain ATCC BAA-871 / DC3000)).